A 142-amino-acid polypeptide reads, in one-letter code: Hemoglobin subunit alpha-3 (142 aa).

One can recognise a Globin domain in the interval 2-142 (VLSAADKSNV…VSTVLTSKYR (141 aa)). H59 lines the O2 pocket. H88 lines the heme b pocket.

This sequence belongs to the globin family. As to quaternary structure, heterotetramer of two alpha chains and two beta chains. Red blood cells.

Functionally, involved in oxygen transport from the lung to the various peripheral tissues. This is Hemoglobin subunit alpha-3 from Bubalus bubalis (Domestic water buffalo).